The following is an 84-amino-acid chain: Sec-independent protein translocase protein TatA (84 aa).

The chain crosses the membrane as a helical span at residues 1-21 (MPNLGVPELLIIALVIFLLFG). Residues 42-57 (EMDEMKTDGDKKELAE) are compositionally biased toward basic and acidic residues. The segment at 42 to 84 (EMDEMKTDGDKKELAEKQAPTAEQQQAQDLAQPKSEQPNEHNA) is disordered. Polar residues predominate over residues 62-77 (TAEQQQAQDLAQPKSE).

Belongs to the TatA/E family. As to quaternary structure, the Tat system comprises two distinct complexes: a TatABC complex, containing multiple copies of TatA, TatB and TatC subunits, and a separate TatA complex, containing only TatA subunits. Substrates initially bind to the TatABC complex, which probably triggers association of the separate TatA complex to form the active translocon.

The protein localises to the cell membrane. Functionally, part of the twin-arginine translocation (Tat) system that transports large folded proteins containing a characteristic twin-arginine motif in their signal peptide across membranes. TatA could form the protein-conducting channel of the Tat system. This Corynebacterium jeikeium (strain K411) protein is Sec-independent protein translocase protein TatA.